Reading from the N-terminus, the 190-residue chain is Protein hunchback (190 aa).

3 disordered regions span residues 13–59, 86–110, and 142–190; these read EPMS…SSNL, AAMT…PNPM, and QTND…KYMA. Basic residues predominate over residues 17 to 31; sequence HHHHHSHHHGHHHML. The span at 90 to 100 shows a compositional bias: polar residues; that stretch reads PSPSNNDQNSP. Over residues 171-190 the composition is skewed to basic and acidic residues; it reads EPEKDHDLISNSSEDMKYMA.

It belongs to the hunchback C2H2-type zinc-finger protein family.

The protein resides in the nucleus. Its function is as follows. Gap class segmentation protein that controls development of head structures. This chain is Protein hunchback (hb), found in Scaptomyza crassifemur (Fruit fly).